The primary structure comprises 130 residues: Cysteine methyltransferase (130 aa).

The catalysed reaction is [trehalose-6-phosphate synthase]-L-cysteine + S-adenosyl-L-methionine = [trehalose-6-phosphate synthase]-S-methyl-L-cysteine + S-adenosyl-L-homocysteine + H(+). Its function is as follows. S-adenosyl-L-methionine-dependent protein-cysteine S-methyltransferase with broad substrate specificity. Methylates trehalose-6-phosphate synthase (TPS), enhancing its enzymatic activity and promoting trehalose synthesis upon entry of cells into stationary phase. This Saccharomyces cerevisiae (Baker's yeast) protein is Cysteine methyltransferase.